The sequence spans 414 residues: Histidine--tRNA ligase (414 aa).

This sequence belongs to the class-II aminoacyl-tRNA synthetase family. In terms of assembly, homodimer.

Its subcellular location is the cytoplasm. It catalyses the reaction tRNA(His) + L-histidine + ATP = L-histidyl-tRNA(His) + AMP + diphosphate + H(+). This chain is Histidine--tRNA ligase, found in Rickettsia africae (strain ESF-5).